The following is a 33-amino-acid chain: Cytochrome b6-f complex subunit 8 (33 aa).

Residues 2 to 22 (LFTVAWASLAAMFSFSIAMVV) form a helical membrane-spanning segment.

Belongs to the PetN family. The 4 large subunits of the cytochrome b6-f complex are cytochrome b6, subunit IV (17 kDa polypeptide, PetD), cytochrome f and the Rieske protein, while the 4 small subunits are PetG, PetL, PetM and PetN. The complex functions as a dimer.

Its subcellular location is the cellular thylakoid membrane. Its function is as follows. Component of the cytochrome b6-f complex, which mediates electron transfer between photosystem II (PSII) and photosystem I (PSI), cyclic electron flow around PSI, and state transitions. In Parasynechococcus marenigrum (strain WH8102), this protein is Cytochrome b6-f complex subunit 8.